The primary structure comprises 2371 residues: Reducing polyketide synthase DEP5 (2371 aa).

A Ketosynthase family 3 (KS3) domain is found at 47-477; that stretch reads LEPIAVVGMG…GTNAHTIIES (431 aa). Catalysis depends on for beta-ketoacyl synthase activity residues Cys221, His358, and His399. A malonyl-CoA:ACP transacylase (MAT) domain region spans residues 593-905; the sequence is VFTGQGAQWA…QYLPTLIRGS (313 aa). Ser685 functions as the For malonyltransferase activity in the catalytic mechanism. Residues 982 to 1120 form an N-terminal hotdog fold region; sequence HDVLGQLTIG…GSIRINTSNK (139 aa). The segment at 982–1158 is dehydratase (DH) domain; sequence HDVLGQLTIG…FNYGPTFQDM (177 aa). The 305-residue stretch at 982 to 1286 folds into the PKS/mFAS DH domain; that stretch reads HDVLGQLTIG…CTAYEAAIPQ (305 aa). Catalysis depends on His1014, which acts as the Proton acceptor; for dehydratase activity. The tract at residues 1132–1286 is C-terminal hotdog fold; that stretch reads PQRASGKLWN…CTAYEAAIPQ (155 aa). Asp1195 (proton donor; for dehydratase activity) is an active-site residue. Residues 1656–1964 are enoyl reductase (ER) domain; the sequence is GKVEAGKVVF…QSLSSTETVL (309 aa). The ketoreductase (KR) domain stretch occupies residues 1988 to 2163; the sequence is ATYLLVGCLG…KHACAVVLPM (176 aa). In terms of domain architecture, Carrier spans 2286–2364; it reads SLVRDHFISK…KFAELVCAAQ (79 aa). Residue Ser2323 is modified to O-(pantetheine 4'-phosphoryl)serine.

It participates in polyketide biosynthesis. Part of the gene cluster that mediates the biosynthesis of depudecin, a highly oxidized eleven-carbon linear polyketide that acts as a histone deacetylase (HDAC) inhibitor and makes a small contribution to pathogenesis. The reducing polyketide synthase DEP5 is the central enzyme in depudecin biosynthesis by yielding the backbone polyketide chain. The monooxygenases DEP2 and DEP4, as well as the uncharacterized protein DEP1, then act as tailoring enzymes to modify the intermediate polyketide chain into depudecin. The chain is Reducing polyketide synthase DEP5 from Fusarium langsethiae.